A 190-amino-acid polypeptide reads, in one-letter code: UPF0149 protein NT01EI_3357 (190 aa).

The protein belongs to the UPF0149 family.

The polypeptide is UPF0149 protein NT01EI_3357 (Edwardsiella ictaluri (strain 93-146)).